Reading from the N-terminus, the 498-residue chain is ATP synthase subunit beta, chloroplastic (498 aa).

Thr6 is modified (phosphothreonine). Phosphoserine is present on Ser13. 172–179 provides a ligand contact to ATP; sequence GGAGVGKT.

It belongs to the ATPase alpha/beta chains family. F-type ATPases have 2 components, CF(1) - the catalytic core - and CF(0) - the membrane proton channel. CF(1) has five subunits: alpha(3), beta(3), gamma(1), delta(1), epsilon(1). CF(0) has four main subunits: a(1), b(1), b'(1) and c(9-12).

The protein localises to the plastid. It is found in the chloroplast thylakoid membrane. It catalyses the reaction ATP + H2O + 4 H(+)(in) = ADP + phosphate + 5 H(+)(out). Functionally, produces ATP from ADP in the presence of a proton gradient across the membrane. The catalytic sites are hosted primarily by the beta subunits. This chain is ATP synthase subunit beta, chloroplastic, found in Brassica napus (Rape).